Consider the following 79-residue polypeptide: MADFEARVKEIIVEQLGVDPAEVVTGASFVNDLGADSLDTVELVMAFEEKFGIEIPDEEAEKIQTVGSAIDYVKTHVRK.

In terms of domain architecture, Carrier spans 2–77 (ADFEARVKEI…SAIDYVKTHV (76 aa)). An O-(pantetheine 4'-phosphoryl)serine modification is found at Ser37.

It belongs to the acyl carrier protein (ACP) family. Post-translationally, 4'-phosphopantetheine is transferred from CoA to a specific serine of apo-ACP by AcpS. This modification is essential for activity because fatty acids are bound in thioester linkage to the sulfhydryl of the prosthetic group.

It localises to the cytoplasm. Its pathway is lipid metabolism; fatty acid biosynthesis. Functionally, carrier of the growing fatty acid chain in fatty acid biosynthesis. This chain is Acyl carrier protein, found in Endomicrobium trichonymphae.